Here is a 658-residue protein sequence, read N- to C-terminus: Sulfate transporter 3.1 (658 aa).

The Cytoplasmic segment spans residues 1 to 85 (MGTEDYTFPQ…RYNLKFFKSD (85 aa)). A helical membrane pass occupies residues 86 to 106 (LIAGITIASLAIPQGISYAKL). The Extracellular portion of the chain corresponds to 107–108 (AN). Residues 109 to 129 (LPPILGLYSSFVPPLVYAVLG) traverse the membrane as a helical segment. Over 130–133 (SSRD) the chain is Cytoplasmic. The chain crosses the membrane as a helical span at residues 134-154 (LAVGTVAVASLLTGAMLSKEV). Over 155-163 (DAEKDPKLY) the chain is Extracellular. Residues 164 to 184 (LHLAFTATFFAGVLEASLGIF) form a helical membrane-spanning segment. Residue arginine 185 is a topological domain, cytoplasmic. A helical membrane pass occupies residues 186-206 (LGFIVDFLSHATIVGFMGGAA). The Extracellular portion of the chain corresponds to 207-245 (TVVSLQQLKGIFGLKHFTDSTDVISVMRSVFSQTHEWRW). The helical transmembrane segment at 246 to 266 (ESGVLGCGFLFFLLSTRYFSI) threads the bilayer. Topologically, residues 267–271 (KKPKF) are cytoplasmic. A helical transmembrane segment spans residues 272–292 (FWVAAMAPLTSVILGSLLVYF). Residues 293–332 (THAERHGVQVIGDLKKGLNPLSGSDLIFTSPYMSTAVKTG) lie on the Extracellular side of the membrane. A helical membrane pass occupies residues 333–353 (LITGIIALAEGVAVGRSFAMF). The Cytoplasmic segment spans residues 354–363 (KNYNIDGNKE). A helical membrane pass occupies residues 364-384 (MIAFGMMNIVGSFTSCYLTTG). The Extracellular portion of the chain corresponds to 385 to 398 (PFSRSAVNYNAGCK). A helical transmembrane segment spans residues 399 to 419 (TAMSNIVMAIAVMFTLLFLTP). The Cytoplasmic portion of the chain corresponds to 420 to 425 (LFHYTP). The helical transmembrane segment at 426 to 446 (LVVLSAIIISAMLGLIDYQAA) threads the bilayer. At 447–464 (IHLWKVDKFDFLVCMSAY) the chain is on the extracellular side. A helical membrane pass occupies residues 465–485 (VGVVFGSVEIGLVVAVAISIA). Topologically, residues 486–658 (RLLLFVSRPK…ASKNEPWNNV (173 aa)) are cytoplasmic. The STAS domain maps to 513–637 (QYPSSRTVPG…LTVGEAVEAC (125 aa)).

Belongs to the SLC26A/SulP transporter (TC 2.A.53) family. In terms of tissue distribution, expressed only in leaves.

The protein resides in the membrane. Functionally, h(+)/sulfate cotransporter that may play a role in the regulation of sulfate assimilation. The chain is Sulfate transporter 3.1 (SULTR3;1) from Arabidopsis thaliana (Mouse-ear cress).